The primary structure comprises 260 residues: MAMPDFTMRQLLEAGVHFGHHTRRWNPRMAPFLFGVRNQVHIIDLQQTVPMLDRALKAIRDTVAGGGRVLFVGTKRAAADQIAEAAKRSGQYYVNHRWLGGMLTNWKTITGSIKRLRQIDDMLTGDTHGLTKKEILDITRNREKLERSLGGIKEMGGLPDILFVIDTNKEKLAVEEANKLGIPVVAILDSNSDPRGVTFPIPGNDDAIRAIALYCELVSGAVLDGISAELGASGQDFGAAEELPVDTAAEAAAAEAAPAA.

It belongs to the universal ribosomal protein uS2 family.

The chain is Small ribosomal subunit protein uS2 from Gluconacetobacter diazotrophicus (strain ATCC 49037 / DSM 5601 / CCUG 37298 / CIP 103539 / LMG 7603 / PAl5).